Consider the following 330-residue polypeptide: Phosphate acyltransferase (330 aa).

This sequence belongs to the PlsX family. Homodimer. Probably interacts with PlsY.

It localises to the cytoplasm. It catalyses the reaction a fatty acyl-[ACP] + phosphate = an acyl phosphate + holo-[ACP]. It functions in the pathway lipid metabolism; phospholipid metabolism. Its function is as follows. Catalyzes the reversible formation of acyl-phosphate (acyl-PO(4)) from acyl-[acyl-carrier-protein] (acyl-ACP). This enzyme utilizes acyl-ACP as fatty acyl donor, but not acyl-CoA. The protein is Phosphate acyltransferase of Streptococcus pneumoniae (strain JJA).